The following is a 235-amino-acid chain: Proteasome subunit alpha (235 aa).

It belongs to the peptidase T1A family. As to quaternary structure, the 20S proteasome core is composed of 14 alpha and 14 beta subunits that assemble into four stacked heptameric rings, resulting in a barrel-shaped structure. The two inner rings, each composed of seven catalytic beta subunits, are sandwiched by two outer rings, each composed of seven alpha subunits. The catalytic chamber with the active sites is on the inside of the barrel. Has a gated structure, the ends of the cylinder being occluded by the N-termini of the alpha-subunits. Is capped by the proteasome-associated ATPase, ARC.

The protein resides in the cytoplasm. It participates in protein degradation; proteasomal Pup-dependent pathway. Its activity is regulated as follows. The formation of the proteasomal ATPase ARC-20S proteasome complex, likely via the docking of the C-termini of ARC into the intersubunit pockets in the alpha-rings, may trigger opening of the gate for substrate entry. Interconversion between the open-gate and close-gate conformations leads to a dynamic regulation of the 20S proteasome proteolysis activity. Its function is as follows. Component of the proteasome core, a large protease complex with broad specificity involved in protein degradation. This is Proteasome subunit alpha from Arthrobacter sp. (strain FB24).